Consider the following 225-residue polypeptide: 7-cyano-7-deazaguanine synthase (225 aa).

8–18 (VSGGADSATVL) lines the ATP pocket. Residues Cys-188, Cys-198, Cys-201, and Cys-204 each contribute to the Zn(2+) site.

It belongs to the QueC family. The cofactor is Zn(2+).

It carries out the reaction 7-carboxy-7-deazaguanine + NH4(+) + ATP = 7-cyano-7-deazaguanine + ADP + phosphate + H2O + H(+). It participates in purine metabolism; 7-cyano-7-deazaguanine biosynthesis. Its function is as follows. Catalyzes the ATP-dependent conversion of 7-carboxy-7-deazaguanine (CDG) to 7-cyano-7-deazaguanine (preQ(0)). This chain is 7-cyano-7-deazaguanine synthase, found in Rickettsia bellii (strain OSU 85-389).